A 384-amino-acid chain; its full sequence is Viral protein 1 (384 aa).

The sequence is that of Viral protein 1 from Chaetoceros setoense (Chaetoceros setoense DNA virus).